A 320-amino-acid polypeptide reads, in one-letter code: uncharacterized protein (320 aa).

The segment at 196 to 273 is disordered; sequence VVPEYDFDSE…RSKNNSNTTK (78 aa). The span at 200 to 210 shows a compositional bias: acidic residues; it reads YDFDSESESDN. Basic and acidic residues predominate over residues 211 to 226; it reads SEEKRFVPVLETEKAP. Positions 248–273 are enriched in polar residues; it reads QPKNPKQTTLKNTLDTRSKNNSNTTK.

This is an uncharacterized protein from Acanthamoeba polyphaga mimivirus (APMV).